Consider the following 167-residue polypeptide: MKRVVTLVSKEQAEVGHRFRVFSVPDECKSCRLFSVCLGRLTPGRSYKVVEVRPSMGQRCKITDSEMVPVVVEEAPIVGLLPLNKALEGVVVTYEDECAGCEGCPNDVVKKGEKVKVVKILGRKKCRNKEFAIVEFFVVSAPSHAVLDSSKTAQAPSRAPSSRRPLK.

This sequence belongs to the UPF0179 family.

This is UPF0179 protein Pars_2336 from Pyrobaculum arsenaticum (strain DSM 13514 / JCM 11321 / PZ6).